A 283-amino-acid polypeptide reads, in one-letter code: Glutamate racemase (283 aa).

Substrate-binding positions include 28–29 (DS) and 60–61 (YG). C92 functions as the Proton donor/acceptor in the catalytic mechanism. Residue 93-94 (NT) participates in substrate binding. The active-site Proton donor/acceptor is the C204. Residue 205–206 (TH) coordinates substrate.

The protein belongs to the aspartate/glutamate racemases family.

The catalysed reaction is L-glutamate = D-glutamate. It participates in cell wall biogenesis; peptidoglycan biosynthesis. In terms of biological role, provides the (R)-glutamate required for cell wall biosynthesis. This chain is Glutamate racemase, found in Salmonella choleraesuis (strain SC-B67).